A 248-amino-acid chain; its full sequence is DNA repair protein RecO (248 aa).

It belongs to the RecO family.

Its function is as follows. Involved in DNA repair and RecF pathway recombination. The sequence is that of DNA repair protein RecO from Rubrobacter xylanophilus (strain DSM 9941 / JCM 11954 / NBRC 16129 / PRD-1).